The sequence spans 430 residues: Nacrein-like protein P2 (430 aa).

N-linked (GlcNAc...) asparagine glycosylation is present at Asn27. One can recognise an Alpha-carbonic anhydrase domain in the interval 33-429 (AGFSYDRSIC…KNKVTVYKSF (397 aa)). His132, His134, and His157 together coordinate Zn(2+). Residues 201 to 312 (DEPDDEECKR…GENGHKHGCR (112 aa)) are disordered. Over residues 207–219 (ECKRILKGHHPDN) the composition is skewed to basic and acidic residues. Residues 220 to 304 (NENGNGDNGN…NNGENGNNGE (85 aa)) are compositionally biased toward low complexity. 27 repeat units span residues 225 to 227 (GDN), 228 to 230 (GNN), 231 to 233 (GYN), 234 to 236 (GDN), 237 to 239 (GNN), 240 to 242 (GDN), 243 to 245 (GNN), 246 to 248 (GYN), 249 to 251 (GDN), 252 to 254 (GNN), 255 to 257 (GVN), 258 to 260 (GNN), 261 to 263 (GYN), 264 to 266 (GDN), 267 to 269 (GNN), 270 to 272 (GDN), 273 to 275 (GNN), 276 to 278 (GYN), 279 to 281 (GDN), 282 to 284 (GNN), 285 to 287 (GDN), 288 to 290 (GNN), 291 to 293 (GEN), 294 to 296 (GNN), 297 to 299 (GEN), 300 to 301 (GN), and 303 to 305 (GEN). The 27 X 3 AA approximate tandem repeats of G-X-N stretch occupies residues 225 to 305 (GDNGNNGYNG…NGENGNNGEN (81 aa)). 370–371 (TT) is a substrate binding site.

It belongs to the alpha-carbonic anhydrase family. Homooligomer; disulfide-linked. May also be disulfide-linked to insoluble organic matrix. Zn(2+) serves as cofactor. Expressed in the mantle.

Its subcellular location is the secreted. It localises to the extracellular space. It is found in the extracellular matrix. It catalyses the reaction hydrogencarbonate + H(+) = CO2 + H2O. Its function is as follows. Acts as a negative regulator for calcification in the shells of mollusks. May function both as a calcium concentrator and as a carbonic anhydrase required for production of carbonate ions, which are assembled to CaCO(3) at mineralization sites. Is important for shell formation in both the calcitic prismatic layer and the aragonitic nacreous layer. Shows inhibitory activity of crystal formation when present in free state but, when attached to the insoluble matrix, may regulate the form and size of aragonite crystal. The sequence is that of Nacrein-like protein P2 from Mizuhopecten yessoensis (Japanese scallop).